We begin with the raw amino-acid sequence, 677 residues long: Pre-mRNA-splicing factor CLF1 (677 aa).

HAT repeat units follow at residues 52-84, 86-118, 120-152, 154-185, 187-218, 220-255, 257-291, 301-333, 335-369, 379-415, 417-448, 450-482, 484-518, 520-551, 570-608, and 613-646; these read EYQG…WELE, KEFR…AEMK, RNIN…MEEM, GNIP…LEKR, NEFD…FEEE, GTSD…YEAK, KEFE…FEKQ, VILS…LEES, GDVE…LWIF, KDME…FEIR, MDLQ…LERQ, FEFV…LERG, DDID…FEEY, GEYD…FEIN, EAKR…FEQT, and DDIA…YMFP.

The protein belongs to the crooked-neck family. In terms of assembly, associated with the spliceosome.

The protein resides in the nucleus. Involved in pre-mRNA splicing and cell cycle progression. Required for the spliceosome assembly and initiation of the DNA replication. This chain is Pre-mRNA-splicing factor CLF1 (CLF1), found in Paracoccidioides brasiliensis.